A 353-amino-acid polypeptide reads, in one-letter code: Phosphate acyltransferase (353 aa).

This sequence belongs to the PlsX family. As to quaternary structure, homodimer. Probably interacts with PlsY.

Its subcellular location is the cytoplasm. It carries out the reaction a fatty acyl-[ACP] + phosphate = an acyl phosphate + holo-[ACP]. It participates in lipid metabolism; phospholipid metabolism. In terms of biological role, catalyzes the reversible formation of acyl-phosphate (acyl-PO(4)) from acyl-[acyl-carrier-protein] (acyl-ACP). This enzyme utilizes acyl-ACP as fatty acyl donor, but not acyl-CoA. The protein is Phosphate acyltransferase of Rhodopseudomonas palustris (strain BisB5).